We begin with the raw amino-acid sequence, 151 residues long: UPF0208 membrane protein YfbV (151 aa).

Over 1-45 the chain is Cytoplasmic; that stretch reads MSTPDNRSVNFFSLFRRGQHYAKTWPMEKRLAPVFVENRVIRMTR. Residues 46–65 traverse the membrane as a helical segment; sequence YAIRFMPPVAVFTLCWQIAL. Topologically, residues 66 to 68 are periplasmic; sequence GGQ. Residues 69–91 traverse the membrane as a helical segment; it reads LGPAVATALFALSLPMQGLWWLG. At 92–151 the chain is on the cytoplasmic side; it reads KRSLTPLPPSILNWFYEVRGKLQEAGQALAPVEGKPDYQALADTLKRAFKQLDKTFLDDL.

The protein belongs to the UPF0208 family.

It is found in the cell inner membrane. This Salmonella typhi protein is UPF0208 membrane protein YfbV (yfbV).